Reading from the N-terminus, the 287-residue chain is Pyridoxal 5'-phosphate synthase subunit PdxS (287 aa).

D-ribose 5-phosphate is bound at residue Asp-21. The active-site Schiff-base intermediate with D-ribose 5-phosphate is the Lys-78. Gly-150 contributes to the D-ribose 5-phosphate binding site. Arg-162 is a D-glyceraldehyde 3-phosphate binding site. D-ribose 5-phosphate contacts are provided by residues Gly-211 and 232–233; that span reads GS.

It belongs to the PdxS/SNZ family. As to quaternary structure, in the presence of PdxT, forms a dodecamer of heterodimers.

The enzyme catalyses aldehydo-D-ribose 5-phosphate + D-glyceraldehyde 3-phosphate + L-glutamine = pyridoxal 5'-phosphate + L-glutamate + phosphate + 3 H2O + H(+). It participates in cofactor biosynthesis; pyridoxal 5'-phosphate biosynthesis. In terms of biological role, catalyzes the formation of pyridoxal 5'-phosphate from ribose 5-phosphate (RBP), glyceraldehyde 3-phosphate (G3P) and ammonia. The ammonia is provided by the PdxT subunit. Can also use ribulose 5-phosphate and dihydroxyacetone phosphate as substrates, resulting from enzyme-catalyzed isomerization of RBP and G3P, respectively. This Tropheryma whipplei (strain Twist) (Whipple's bacillus) protein is Pyridoxal 5'-phosphate synthase subunit PdxS.